A 59-amino-acid chain; its full sequence is Large ribosomal subunit protein bL32 (59 aa).

The protein belongs to the bacterial ribosomal protein bL32 family.

This is Large ribosomal subunit protein bL32 from Synechococcus sp. (strain RCC307).